The primary structure comprises 266 residues: Pre-mRNA-splicing factor PRP11 (266 aa).

Residues 1-21 (MNYLEGVGSKKGGGGIASESQ) form a disordered region. The Matrin-type zinc-finger motif lies at 66-96 (LVCKLCNTMHMSWSSVERHLGGKKHGLNVLR).

It belongs to the SF3A2 family. Belongs to the CWC complex (or CEF1-associated complex), a spliceosome sub-complex reminiscent of a late-stage spliceosome composed of the U2, U5 and U6 snRNAs and at least BUD13, BUD31, BRR2, CDC40, CEF1, CLF1, CUS1, CWC2, CWC15, CWC21, CWC22, CWC23, CWC24, CWC25, CWC27, ECM2, HSH155, IST3, ISY1, LEA1, MSL1, NTC20, PRP8, PRP9, PRP11, PRP19, PRP21, PRP22, PRP45, PRP46, SLU7, SMB1, SMD1, SMD2, SMD3, SMX2, SMX3, SNT309, SNU114, SPP2, SYF1, SYF2, RSE1 and YJU2. Interacts with CUS2.

The protein localises to the nucleus. Its function is as follows. mRNA splicing factors, PRP9, PRP11, and PRP21, are necessary for addition of the U2 snRNP to the pre-mRNA in an early step of spliceosome assembly. In Saccharomyces cerevisiae (strain ATCC 204508 / S288c) (Baker's yeast), this protein is Pre-mRNA-splicing factor PRP11 (PRP11).